The sequence spans 388 residues: Protein SopA (388 aa).

Belongs to the ParA family.

Functionally, this protein is essential for plasmid partition. It ensures the proper distribution of newly replicated plasmids to daughter cells during cell division. SopA is trans-acting. This chain is Protein SopA (sopA), found in Escherichia coli O157:H7.